A 260-amino-acid chain; its full sequence is Acetylglutamate kinase (260 aa).

Residues 46-47 (GG), Arg-68, and Asn-160 contribute to the substrate site.

It belongs to the acetylglutamate kinase family. ArgB subfamily.

It is found in the cytoplasm. The catalysed reaction is N-acetyl-L-glutamate + ATP = N-acetyl-L-glutamyl 5-phosphate + ADP. Its pathway is amino-acid biosynthesis; L-arginine biosynthesis; N(2)-acetyl-L-ornithine from L-glutamate: step 2/4. Its function is as follows. Catalyzes the ATP-dependent phosphorylation of N-acetyl-L-glutamate. In Shewanella oneidensis (strain ATCC 700550 / JCM 31522 / CIP 106686 / LMG 19005 / NCIMB 14063 / MR-1), this protein is Acetylglutamate kinase.